Consider the following 1304-residue polypeptide: Splicing factor 3B subunit 1 (1304 aa).

Disordered regions lie at residues 100–119 (QYDPFAEHRPPKIADREDEY) and 124–148 (RTMIISPERLDPFADGGKTPDPKMN). A compositionally biased stretch (basic and acidic residues) spans 104–119 (FAEHRPPKIADREDEY). Thr125 carries the phosphothreonine modification. The residue at position 129 (Ser129) is a Phosphoserine. Lys141 carries the post-translational modification N6-acetyllysine. Thr142 is subject to Phosphothreonine. Citrulline is present on Arg157. Positions 173–360 (AEKAKAGELK…PVLTPGKTPI (188 aa)) are disordered. The interval 190–342 (SQPPSKRKRR…KRKSRWDETP (153 aa)) is U2AF homology region; mediates interaction with RBM39. Phosphoserine is present on Ser194. Phosphothreonine occurs at positions 203, 207, and 211. N6-acetyllysine; alternate is present on Lys214. A Glycyl lysine isopeptide (Lys-Gly) (interchain with G-Cter in SUMO2); alternate cross-link involves residue Lys214. Phosphothreonine occurs at positions 223 and 227. Positions 223 to 491 (TPGHTPSLRW…VDESTLSPEE (269 aa)) are interaction with PPP1R8. Ser229 is modified (phosphoserine). Residues 231-241 (RWDETPGRAKG) are compositionally biased toward basic and acidic residues. Residues Thr235, Thr244, Thr248, Thr257, Thr261, Thr267, Thr273, and Thr278 each carry the phosphothreonine modification. A Phosphoserine modification is found at Ser287. A compositionally biased stretch (basic and acidic residues) spans 291–304 (NRWDETPKTERDTP). Thr296, Thr299, Thr303, and Thr313 each carry phosphothreonine. Phosphoserine is present on Ser322. Residues Thr326 and Thr328 each carry the phosphothreonine modification. Ser332 is subject to Phosphoserine. Thr341 carries the phosphothreonine modification. Residues 342–352 (PASQMGGSTPV) are compositionally biased toward polar residues. Residues Ser344 and Ser349 each carry the phosphoserine modification. Residues Thr350 and Thr354 each carry the phosphothreonine modification. Residue Ser400 is modified to Phosphoserine. A Glycyl lysine isopeptide (Lys-Gly) (interchain with G-Cter in SUMO2); alternate cross-link involves residue Lys413. A Glycyl lysine isopeptide (Lys-Gly) (interchain with G-Cter in SUMO1); alternate cross-link involves residue Lys413. Phosphothreonine is present on Thr426. Residue Lys430 forms a Glycyl lysine isopeptide (Lys-Gly) (interchain with G-Cter in SUMO2) linkage. The residue at position 434 (Thr434) is a Phosphothreonine; by DYRK1A. Phosphothreonine is present on Thr436. Ser488 is modified (phosphoserine). 11 HEAT repeats span residues 529–568 (GPLFNQILPLLMSPTLEDQERHLLVKVIDRILYKLDDLVR), 569–603 (PYVHKILVVIEPLLIDEDYYARVEGREIISNLAKA), 604–641 (AGLATMISTMRPDIDNMDEYVRNTTARAFAVVASALGI), 643–677 (SLLPFLKAVCKSKKSWQARHTGIKIVQQIAILMGC), 680–718 (LPHLRSLVEIIEHGLVDEQQKVRTISALAIAALAEAATP), 763–801 (NYYTREVMLILIREFQSPDEEMKKIVLKVVKQCCGTDGV), 843–881 (KVGAAEIISRIVDDLKDEAEQYRKMVMETIEKIMGNLGA), 1010–1048 (TPPIKDLLPRLTPILKNRHEKVQENCIDLVGRIADRGAE), 1052–1090 (AREWMRICFELLELLKAHKKAIRRATVNTFGYIAKAIGP), 1122–1160 (TCSPFTVLPALMNEYRVPELNVQNGVLKSLSFLFEYIGE), and 1163–1201 (KDYIYAVTPLLEDALMDRDLVHRQTASAVVQHMSLGVYG). The interval 529 to 568 (GPLFNQILPLLMSPTLEDQERHLLVKVIDRILYKLDDLVR) is interaction with SF3B14. The interval 547 to 550 (QERH) is interaction with PHF5A. Lys554 and Lys562 each carry N6-acetyllysine. The interval 1156 to 1157 (EY) is interaction with PHF5A. The interaction with SF3B3 and SF3B5 stretch occupies residues 1248–1304 (QYCLQGLFHPARKVRDVYWKIYNSIYIGSQDALIAHYPRIYNDDKNTYIRYELDYIL).

This sequence belongs to the SF3B1 family. In terms of assembly, component of the 17S U2 SnRNP complex, a ribonucleoprotein complex that contains small nuclear RNA (snRNA) U2 and a number of specific proteins. Part of the SF3B subcomplex of the 17S U2 SnRNP complex. SF3B associates with the splicing subcomplex SF3A and a 12S RNA unit to form the U2 small nuclear ribonucleoproteins complex (U2 snRNP). Within the SF3B complex, interacts directly (via HEAT domain) with SF3B3, SF3B5, SF3B6 and (via HEAT domain) with PHF5A. The SF3B subcomplex interacts with U2AF2. Identified in the spliceosome C complex. Component of the minor (U12-type spliceosome) spliceosome. Within the minor spliceosome complex, interacts with SCNM1 and CRIPT. Component of the B-WICH complex, at least composed of SMARCA5/SNF2H, BAZ1B/WSTF, SF3B1, DEK, MYO1C, ERCC6, MYBBP1A and DDX21. Phosphorylated form interacts with PPP1R8. Interacts with PQBP1. Interacts with RBM17. Interacts with RBM39. Interacts with SETX. Interacts with RBM15. Interacts with USH1G. Interacts with SDE2. Interacts with U2AF1. Interacts with CACTIN. Interacts with ZRSR1. Interacts with CYREN. Post-translationally, phosphorylated. Phosphorylation occurs concomitantly with the splicing catalytic steps. Phosphorylation on Thr-244, Thr-248 and Thr-313 by cyclin-dependent kinases promotes interaction with PPP1R8 during mitosis. Citrullinated by PADI4.

It is found in the nucleus. Its subcellular location is the nucleus speckle. Component of the 17S U2 SnRNP complex of the spliceosome, a large ribonucleoprotein complex that removes introns from transcribed pre-mRNAs. The 17S U2 SnRNP complex (1) directly participates in early spliceosome assembly and (2) mediates recognition of the intron branch site during pre-mRNA splicing by promoting the selection of the pre-mRNA branch-site adenosine, the nucleophile for the first step of splicing. Within the 17S U2 SnRNP complex, SF3B1 is part of the SF3B subcomplex, which is required for 'A' complex assembly formed by the stable binding of U2 snRNP to the branchpoint sequence in pre-mRNA. Sequence independent binding of SF3A and SF3B subcomplexes upstream of the branch site is essential, it may anchor U2 snRNP to the pre-mRNA. May also be involved in the assembly of the 'E' complex. Also acts as a component of the minor spliceosome, which is involved in the splicing of U12-type introns in pre-mRNAs. Together with other U2 snRNP complex components may also play a role in the selective processing of microRNAs (miRNAs) from the long primary miRNA transcript, pri-miR-17-92. The polypeptide is Splicing factor 3B subunit 1 (Homo sapiens (Human)).